Here is a 25-residue protein sequence, read N- to C-terminus: SHYSEGPGQNLPFSVQNKXRLLGMM.

A disordered region spans residues 1–25 (SHYSEGPGQNLPFSVQNKXRLLGMM).

This sequence belongs to the cytochrome c oxidase VIIc family. Component of the cytochrome c oxidase (complex IV, CIV), a multisubunit enzyme composed of 14 subunits. The complex is composed of a catalytic core of 3 subunits MT-CO1, MT-CO2 and MT-CO3, encoded in the mitochondrial DNA, and 11 supernumerary subunits COX4I, COX5A, COX5B, COX6A, COX6B, COX6C, COX7A, COX7B, COX7C, COX8 and NDUFA4, which are encoded in the nuclear genome. The complex exists as a monomer or a dimer and forms supercomplexes (SCs) in the inner mitochondrial membrane with NADH-ubiquinone oxidoreductase (complex I, CI) and ubiquinol-cytochrome c oxidoreductase (cytochrome b-c1 complex, complex III, CIII), resulting in different assemblies (supercomplex SCI(1)III(2)IV(1) and megacomplex MCI(2)III(2)IV(2)). Interacts with RAB5IF.

It localises to the mitochondrion inner membrane. It participates in energy metabolism; oxidative phosphorylation. Its function is as follows. Component of the cytochrome c oxidase, the last enzyme in the mitochondrial electron transport chain which drives oxidative phosphorylation. The respiratory chain contains 3 multisubunit complexes succinate dehydrogenase (complex II, CII), ubiquinol-cytochrome c oxidoreductase (cytochrome b-c1 complex, complex III, CIII) and cytochrome c oxidase (complex IV, CIV), that cooperate to transfer electrons derived from NADH and succinate to molecular oxygen, creating an electrochemical gradient over the inner membrane that drives transmembrane transport and the ATP synthase. Cytochrome c oxidase is the component of the respiratory chain that catalyzes the reduction of oxygen to water. Electrons originating from reduced cytochrome c in the intermembrane space (IMS) are transferred via the dinuclear copper A center (CU(A)) of subunit 2 and heme A of subunit 1 to the active site in subunit 1, a binuclear center (BNC) formed by heme A3 and copper B (CU(B)). The BNC reduces molecular oxygen to 2 water molecules using 4 electrons from cytochrome c in the IMS and 4 protons from the mitochondrial matrix. This is Cytochrome c oxidase polypeptide VIIc from Oncorhynchus mykiss (Rainbow trout).